A 324-amino-acid chain; its full sequence is Glyceraldehyde-3-phosphate dehydrogenase 1 (324 aa).

Residues 13–14 (RI), D35, and K85 each bind NAD(+). D-glyceraldehyde 3-phosphate contacts are provided by residues 157 to 159 (SCT), T188, 217 to 218 (TG), and R240. C158 serves as the catalytic Nucleophile. Position 322 (N322) interacts with NAD(+).

Belongs to the glyceraldehyde-3-phosphate dehydrogenase family. Homotetramer.

The protein resides in the cytoplasm. It catalyses the reaction D-glyceraldehyde 3-phosphate + phosphate + NAD(+) = (2R)-3-phospho-glyceroyl phosphate + NADH + H(+). The protein operates within carbohydrate degradation; glycolysis; pyruvate from D-glyceraldehyde 3-phosphate: step 1/5. This chain is Glyceraldehyde-3-phosphate dehydrogenase 1 (GPD-1), found in Globodera rostochiensis (Golden nematode worm).